We begin with the raw amino-acid sequence, 677 residues long: Methionine--tRNA ligase (677 aa).

The short motif at 15–25 (PYANGSIHLGH) is the 'HIGH' region element. Residues Cys146, Cys149, Cys159, and Cys162 each contribute to the Zn(2+) site. The short motif at 333–337 (KMSKS) is the 'KMSKS' region element. Residue Lys336 coordinates ATP. Positions 576-677 (DFAKIDLRVA…EGAKPGMRVK (102 aa)) constitute a tRNA-binding domain.

This sequence belongs to the class-I aminoacyl-tRNA synthetase family. MetG type 1 subfamily. Homodimer. Zn(2+) serves as cofactor.

Its subcellular location is the cytoplasm. It carries out the reaction tRNA(Met) + L-methionine + ATP = L-methionyl-tRNA(Met) + AMP + diphosphate. Is required not only for elongation of protein synthesis but also for the initiation of all mRNA translation through initiator tRNA(fMet) aminoacylation. This Aeromonas hydrophila subsp. hydrophila (strain ATCC 7966 / DSM 30187 / BCRC 13018 / CCUG 14551 / JCM 1027 / KCTC 2358 / NCIMB 9240 / NCTC 8049) protein is Methionine--tRNA ligase.